The chain runs to 132 residues: Capsid protein (132 aa).

This sequence belongs to the Leviviricetes capsid protein family. Homodimer. The capsid protein dimer binds to the viral RNA via an operator hairpin, but also many other RNA sequences in the viral genome.

Its subcellular location is the virion. Its function is as follows. Capsid protein self-assembles to form an icosahedral capsid with a T=3 symmetry, about 26 nm in diameter, and consisting of 89 capsid proteins dimers (178 capsid proteins). Involved in viral genome encapsidation through the interaction between a capsid protein dimer and the multiple packaging signals present in the RNA genome. Binding of the capsid proteins to the viral RNA induces a conformational change required for efficient T=3 shell formation. The capsid also contains 1 copy of the A2 maturation protein. Functionally, acts as a translational repressor of viral replicase synthesis late in infection. This latter function is the result of capsid protein interaction with an RNA hairpin which contains the replicase ribosome-binding site. This Enterobacteria phage SP (Bacteriophage SP) protein is Capsid protein.